The primary structure comprises 328 residues: Cytochrome c biogenesis protein CcsA (328 aa).

Transmembrane regions (helical) follow at residues 13 to 33, 46 to 66, 73 to 93, 101 to 121, 146 to 166, 234 to 254, 263 to 283, and 295 to 315; these read ISFS…LVNL, GIVI…IYSG, LYES…VSYF, LNAI…SGLL, MILG…LLVI, IISL…VWAN, WDPK…YLHI, and AIVA…VNLL.

This sequence belongs to the CcmF/CycK/Ccl1/NrfE/CcsA family. As to quaternary structure, may interact with Ccs1.

The protein localises to the plastid. It is found in the chloroplast thylakoid membrane. Its function is as follows. Required during biogenesis of c-type cytochromes (cytochrome c6 and cytochrome f) at the step of heme attachment. The protein is Cytochrome c biogenesis protein CcsA of Nasturtium officinale (Watercress).